A 361-amino-acid polypeptide reads, in one-letter code: GDP-mannose 4,6 dehydratase 1 (361 aa).

NADP(+) contacts are provided by residues 23–28, 79–80, 101–105, and Tyr116; these read GITGQD, DL, and LAAQS. The active site involves Ser150. Residues Glu152 and Tyr173 each act as nucleophile in the active site. The NADP(+) site is built by Lys177, His203, and Arg208.

This sequence belongs to the NAD(P)-dependent epimerase/dehydratase family. GDP-mannose 4,6-dehydratase subfamily. As to quaternary structure, homotetramer. The cofactor is NADP(+). In terms of tissue distribution, expressed in roots,stipules and pollen just before anthesis. Primarily localized to the root meristem and columella root cap. Not expressed in emerging lateral roots.

It carries out the reaction GDP-alpha-D-mannose = GDP-4-dehydro-alpha-D-rhamnose + H2O. Its pathway is nucleotide-sugar biosynthesis; GDP-L-fucose biosynthesis via de novo pathway; GDP-L-fucose from GDP-alpha-D-mannose: step 1/2. Functionally, catalyzes the conversion of GDP-D-mannose to GDP-4-dehydro-6-deoxy-D-mannose. The chain is GDP-mannose 4,6 dehydratase 1 (GMD1) from Arabidopsis thaliana (Mouse-ear cress).